Here is a 669-residue protein sequence, read N- to C-terminus: DNA ligase (669 aa).

NAD(+)-binding positions include 34–38 (DAEYD), 83–84 (SL), and Glu-117. The active-site N6-AMP-lysine intermediate is the Lys-119. Arg-140, Glu-177, Lys-293, and Lys-317 together coordinate NAD(+). Residues Cys-411, Cys-414, Cys-429, and Cys-434 each coordinate Zn(2+). One can recognise a BRCT domain in the interval 591–669 (RLGGRFTGKT…EDEFLKMLEG (79 aa)).

The protein belongs to the NAD-dependent DNA ligase family. LigA subfamily. Mg(2+) serves as cofactor. It depends on Mn(2+) as a cofactor.

The enzyme catalyses NAD(+) + (deoxyribonucleotide)n-3'-hydroxyl + 5'-phospho-(deoxyribonucleotide)m = (deoxyribonucleotide)n+m + AMP + beta-nicotinamide D-nucleotide.. DNA ligase that catalyzes the formation of phosphodiester linkages between 5'-phosphoryl and 3'-hydroxyl groups in double-stranded DNA using NAD as a coenzyme and as the energy source for the reaction. It is essential for DNA replication and repair of damaged DNA. This chain is DNA ligase, found in Geotalea daltonii (strain DSM 22248 / JCM 15807 / FRC-32) (Geobacter daltonii).